Consider the following 694-residue polypeptide: Elongation factor G 2 (694 aa).

The tr-type G domain occupies 6–282 (SKLRNIGISA…GVVDYLPDPT (277 aa)). GTP is bound by residues 15–22 (AHIDSGKT), 82–86 (DTPGH), and 136–139 (NKCD).

Belongs to the TRAFAC class translation factor GTPase superfamily. Classic translation factor GTPase family. EF-G/EF-2 subfamily.

It localises to the cytoplasm. Catalyzes the GTP-dependent ribosomal translocation step during translation elongation. During this step, the ribosome changes from the pre-translocational (PRE) to the post-translocational (POST) state as the newly formed A-site-bound peptidyl-tRNA and P-site-bound deacylated tRNA move to the P and E sites, respectively. Catalyzes the coordinated movement of the two tRNA molecules, the mRNA and conformational changes in the ribosome. This chain is Elongation factor G 2, found in Anaeromyxobacter dehalogenans (strain 2CP-C).